Here is a 68-residue protein sequence, read N- to C-terminus: Venom peptide 3 (68 aa).

Residues 1–25 (MTKQSIVIVLFAAIAMMACLQRVTA) form the signal peptide. AXPX repeat units follow at residues 25–28 (AEPA), 33–36 (AAPI), 37–40 (AEPY), 41–44 (ANPE), and 47–50 (ASPE). A propeptide spanning residues 26-51 (EPAPEPIAAPIAEPYANPEAIASPEA) is cleaved from the precursor. L65 carries the post-translational modification Leucine amide.

As to expression, expressed by the venom gland.

It localises to the secreted. The protein localises to the target cell membrane. Antimicrobial peptide with strong activity against the fungi B.cinerea (MIC=5 uM) and C.albicans (MIC=33 uM), and no activity against the Gram-negative bacterium E.coli (MIC&gt;200 uM) and the Gram-positive bacterium S.aureus (MIC&gt;200 uM). Shows cytolytic activity against insect cell lines. Has no hemolytic activity against human erythrocytes. In vivo, peptide injection in the vicinity of the head and thorax of lepidopteran larvae induces feeding disorder that lasts one or two days before recovering. The chain is Venom peptide 3 from Orancistrocerus drewseni (Solitary wasp).